The sequence spans 156 residues: Small ribosomal subunit protein uS7 (156 aa).

The protein belongs to the universal ribosomal protein uS7 family. As to quaternary structure, part of the 30S ribosomal subunit. Contacts proteins S9 and S11.

In terms of biological role, one of the primary rRNA binding proteins, it binds directly to 16S rRNA where it nucleates assembly of the head domain of the 30S subunit. Is located at the subunit interface close to the decoding center, probably blocks exit of the E-site tRNA. The chain is Small ribosomal subunit protein uS7 from Pseudomonas syringae pv. syringae (strain B728a).